Consider the following 134-residue polypeptide: Replication enhancer protein (134 aa).

The protein belongs to the geminiviridae replication enhancer protein family. In terms of assembly, homooligomer. Interacts with the replication-associated protein (REP). Interacts with host proliferating cell nuclear antigen (PCNA). Interacts with host retinoblastoma-related protein 1 (RBR1), and may thereby deregulate the host cell cycle. Oligomerization and interaction with PCNA are necessary for optimal replication enhancement.

In terms of biological role, increases viral DNA accumulation. Enhances infectivity and symptom expression. The chain is Replication enhancer protein from Solanum lycopersicum (Tomato).